Here is a 448-residue protein sequence, read N- to C-terminus: DNA repair protein RadA (448 aa).

The C4-type zinc-finger motif lies at 10–27; that stretch reads CQHCGFTSPKWLGKCVQC. 96 to 103 lines the ATP pocket; the sequence is GSPGVGKS. A RadA KNRFG motif motif is present at residues 253–257; it reads KNRFG. Positions 351-448 are lon-protease-like; the sequence is DVFINVSGGI…NAVGKIVEWM (98 aa).

It belongs to the RecA family. RadA subfamily.

Its function is as follows. DNA-dependent ATPase involved in processing of recombination intermediates, plays a role in repairing DNA breaks. Stimulates the branch migration of RecA-mediated strand transfer reactions, allowing the 3' invading strand to extend heteroduplex DNA faster. Binds ssDNA in the presence of ADP but not other nucleotides, has ATPase activity that is stimulated by ssDNA and various branched DNA structures, but inhibited by SSB. Does not have RecA's homology-searching function. The sequence is that of DNA repair protein RadA from Helicobacter pylori (strain ATCC 700392 / 26695) (Campylobacter pylori).